The sequence spans 384 residues: Galactokinase (384 aa).

34–37 (EHTD) is a substrate binding site. An ATP-binding site is contributed by 123-129 (SSGLSSS). Mg(2+)-binding residues include S129 and E161. Catalysis depends on D173, which acts as the Proton acceptor. Residue Y222 participates in substrate binding.

The protein belongs to the GHMP kinase family. GalK subfamily.

Its subcellular location is the cytoplasm. The catalysed reaction is alpha-D-galactose + ATP = alpha-D-galactose 1-phosphate + ADP + H(+). It participates in carbohydrate metabolism; galactose metabolism. Its function is as follows. Catalyzes the transfer of the gamma-phosphate of ATP to D-galactose to form alpha-D-galactose-1-phosphate (Gal-1-P). This Haemophilus influenzae (strain PittEE) protein is Galactokinase.